The chain runs to 37 residues: Large ribosomal subunit protein bL36c (37 aa).

It belongs to the bacterial ribosomal protein bL36 family.

It localises to the plastid. It is found in the chloroplast. The polypeptide is Large ribosomal subunit protein bL36c (Gracilaria tenuistipitata var. liui (Red alga)).